The chain runs to 365 residues: Potassium channel subfamily K member 9 (365 aa).

The Cytoplasmic segment spans residues 1–8 (MKKQNVRT). A helical transmembrane segment spans residues 9-29 (LSLIACTFTYLLVGAAVFDAL). Residues 30 to 88 (ESDHEMREEEKLKAEEIRIRGKYNISTEDYRQLELVILQSEPHRAGVQWKFAGSFYFAI) are Extracellular-facing. Asn53 carries an N-linked (GlcNAc...) asparagine glycan. The pore-forming intramembrane region spans 89 to 101 (TVITTIGYGHAAP). Thr93, Ile94, Gly95, and Tyr96 together coordinate K(+). Positions 93-98 (TIGYGH) are selectivity filter 1. Residues 102–107 (GTDAGK) lie on the Extracellular side of the membrane. A helical membrane pass occupies residues 108–128 (AFCMFYAVLGIPLTLVMFQSL). Over 129–158 (GERMNTFVRYLLKRIKKCCGMRNTEVSMEN) the chain is Cytoplasmic. Residues 159–179 (MVTVGFFSCMGTLCIGAAAFS) form a helical membrane-spanning segment. Residues 180-194 (QCEEWSFFHAYYYCF) are Extracellular-facing. Positions 195 to 207 (ITLTTIGFGDYVA) form an intramembrane region, pore-forming. The K(+) site is built by Thr199, Ile200, Gly201, and Phe202. The segment at 199-204 (TIGFGD) is selectivity filter 2. At 208 to 218 (LQSKGALQRKP) the chain is on the extracellular side. Residues 219 to 239 (FYVAFSFMYILVGLTVIGAFL) form a helical membrane-spanning segment. The Cytoplasmic segment spans residues 240-365 (NLVVLRFLTM…HRLMLRRKSV (126 aa)). The X-gate stretch occupies residues 243-248 (VLRFLT).

It belongs to the two pore domain potassium channel (TC 1.A.1.8) family. As to quaternary structure, homodimer. Heterodimer with KCNK1. Heterodimer with KCNK3. As to expression, highly expressed in the brain.

Its subcellular location is the cell membrane. The protein resides in the mitochondrion inner membrane. The protein localises to the cell projection. It localises to the dendrite. The catalysed reaction is K(+)(in) = K(+)(out). It catalyses the reaction Na(+)(in) = Na(+)(out). With respect to regulation, inhibited by extracellular acidification. Its function is as follows. K(+) channel that conducts voltage-dependent outward rectifying currents upon membrane depolarization. Voltage sensing is coupled to K(+) electrochemical gradient in an 'ion flux gating' mode where outward but not inward ion flow opens the gate. Changes ion selectivity and becomes permeable to Na(+) ions in response to extracellular acidification. Protonation of the pH sensor His-98 stabilizes C-type inactivation conformation likely converting the channel from outward K(+)-conducting, to inward Na(+)-conducting to nonconductive state. Homo- and heterodimerizes to form functional channels with distinct regulatory and gating properties. Allows K(+) currents with fast-gating kinetics important for the repolarization and hyperpolarization phases of action potentials. In granule neurons, hyperpolarizes the resting membrane potential to limit intrinsic neuronal excitability, but once the action potential threshold is reached, supports high-frequency action potential firing and increased neuronal excitability. Homomeric and/or heteromeric KCNK3:KCNK9 channels operate in cerebellar granule cells, whereas heteromeric KCNK1:KCNK9 enables currents in hippocampal dentate gyrus granule neurons. Dispensable for central chemosensory respiration i.e. breathing controlled by brainstem CO2/pH, it rather conducts pH-sensitive currents and controls the firing rate of serotonergic raphe neurons involved in potentiation of the respiratory chemoreflex. In retinal ganglion cells, mediates outward rectifying currents that regulate action potentials in response to acidification of the synaptic cleft. Involved in transmission of image-forming and nonimage-forming visual information in the retina. In adrenal gland, contributes to the maintenance of a hyperpolarized resting membrane potential of aldosterone-producing cells at zona glomerulosa and limits aldosterone release as part of a regulatory mechanism that controls arterial blood pressure and electrolyte homeostasis. In Cavia porcellus (Guinea pig), this protein is Potassium channel subfamily K member 9 (KCNK9).